The following is a 304-amino-acid chain: Large ribosomal subunit protein uL18 (304 aa).

The segment at 285–304 is disordered; sequence LNALNSSAGADDDDEEEDDE. The segment covering 294–304 has biased composition (acidic residues); that stretch reads ADDDDEEEDDE.

Belongs to the universal ribosomal protein uL18 family. As to quaternary structure, component of the large ribosomal subunit (LSU).

Its subcellular location is the cytoplasm. It localises to the nucleus. Functionally, component of the ribosome, a large ribonucleoprotein complex responsible for the synthesis of proteins in the cell. The small ribosomal subunit (SSU) binds messenger RNAs (mRNAs) and translates the encoded message by selecting cognate aminoacyl-transfer RNA (tRNA) molecules. The large subunit (LSU) contains the ribosomal catalytic site termed the peptidyl transferase center (PTC), which catalyzes the formation of peptide bonds, thereby polymerizing the amino acids delivered by tRNAs into a polypeptide chain. The nascent polypeptides leave the ribosome through a tunnel in the LSU and interact with protein factors that function in enzymatic processing, targeting, and the membrane insertion of nascent chains at the exit of the ribosomal tunnel. The protein is Large ribosomal subunit protein uL18 (RPL5A) of Oryza sativa subsp. indica (Rice).